The primary structure comprises 546 residues: MAAKDVVFGDSARSKMVEGVNILANAVKVTLGPKGRNVVLERSFGGPTVTKDGVSVAKEIELKDKLQNMGAQMVKEVASKTSDNAGDGTTTATVLAQSIVREGMKYVASGMNPMDLKRGIDKAVAAAVEELKKISKPCTTNKEIAQVGSISANSDSSIGDRIAEAMDKVGKEGVITVEDGKSLADELDVVEGMQFDRGYLSPYFINNPDKQVAVLDNPFVLLHDKKVSNIRDLLPVLEQVAKAGRPLLIIAEDVEGEALATLVVNNIRGILKTVAVKAPGFGDRRKAMLEDIAILTGGQVVAEETGLTLEKATLAELGQAKRIEVGKENTTIIDGAGEAVNIEARVKQVRAQIEEATSDYDREKLQERVAKLAGGVAVIKVGAATEVEMKEKKARVEDALHATRAAVEEGIVAGGGVALIRARTAIAGLTGANADQNAGIKIVLRAMEEPLRQIVTNGGEEASVVVAAVAAGKGNYGYNAATGEYVDMVEAGVVDPTKVTRTALQNAASVAGLLLTTDAAVAELPKEDAPMPGGMPGGMGGMGMDM.

ATP contacts are provided by residues 30-33 (TLGP), K51, 87-91 (DGTTT), G415, 479-481 (NAA), and D495. The segment at 526–546 (KEDAPMPGGMPGGMGGMGMDM) is disordered. Residues 534 to 546 (GMPGGMGGMGMDM) show a composition bias toward gly residues.

This sequence belongs to the chaperonin (HSP60) family. Forms a cylinder of 14 subunits composed of two heptameric rings stacked back-to-back. Interacts with the co-chaperonin GroES.

Its subcellular location is the cytoplasm. It carries out the reaction ATP + H2O + a folded polypeptide = ADP + phosphate + an unfolded polypeptide.. In terms of biological role, together with its co-chaperonin GroES, plays an essential role in assisting protein folding. The GroEL-GroES system forms a nano-cage that allows encapsulation of the non-native substrate proteins and provides a physical environment optimized to promote and accelerate protein folding. The sequence is that of Chaperonin GroEL 1 from Burkholderia cenocepacia (strain HI2424).